The chain runs to 376 residues: Acetylornithine aminotransferase (376 aa).

Residues glycine 96–threonine 97 and phenylalanine 128 each bind pyridoxal 5'-phosphate. Arginine 131 is a binding site for N(2)-acetyl-L-ornithine. Aspartate 213 to glutamine 216 lines the pyridoxal 5'-phosphate pocket. An N6-(pyridoxal phosphate)lysine modification is found at lysine 242. Residue serine 270 participates in N(2)-acetyl-L-ornithine binding. Threonine 271 contacts pyridoxal 5'-phosphate.

It belongs to the class-III pyridoxal-phosphate-dependent aminotransferase family. ArgD subfamily. As to quaternary structure, homodimer. It depends on pyridoxal 5'-phosphate as a cofactor.

It is found in the cytoplasm. It catalyses the reaction N(2)-acetyl-L-ornithine + 2-oxoglutarate = N-acetyl-L-glutamate 5-semialdehyde + L-glutamate. It participates in amino-acid biosynthesis; L-arginine biosynthesis; N(2)-acetyl-L-ornithine from L-glutamate: step 4/4. The sequence is that of Acetylornithine aminotransferase from Aquifex aeolicus (strain VF5).